We begin with the raw amino-acid sequence, 554 residues long: (E)-nerolidol synthase TPS18VF (554 aa).

Arginine 276, aspartate 313, aspartate 317, arginine 455, and aspartate 458 together coordinate (2E,6E)-farnesyl diphosphate. Residues aspartate 313 and aspartate 317 each contribute to the Mg(2+) site. The DDXXD motif motif lies at 313–317 (DDIFD). Mg(2+)-binding residues include aspartate 458, serine 462, and glutamate 466.

The protein belongs to the terpene synthase family. Tpsb subfamily. The cofactor is Mg(2+). Mn(2+) serves as cofactor. As to expression, highly expressed in glandular trichomes.

The catalysed reaction is (2E,6E)-farnesyl diphosphate + H2O = (6E)-nerolidol + diphosphate. It carries out the reaction (2E)-geranyl diphosphate + H2O = (S)-linalool + diphosphate. It functions in the pathway secondary metabolite biosynthesis; terpenoid biosynthesis. Involved in sesquiterpene olefins biosynthesis, constituants of cannabinoids and terpenoids-rich resins. Catalyzes primarily the conversion of (2E)-farnesyl diphosphate to (E)-nerolidol, and the conversion of (2E)-geranyl diphosphate to (+)linalool. The polypeptide is (E)-nerolidol synthase TPS18VF (Cannabis sativa (Hemp)).